Here is a 177-residue protein sequence, read N- to C-terminus: MTVATNVNAAGVDREVATQELNRELQDKGFLLTSTEDIINWARTGSLHWMTFGLACCAVEMMHTAMPRYDMERFGTAPRASPRQSDLMIVAGTLTNKMAPALRKVYDQMPEPRYVISMGSCANGGGYYHYSYSVVRGCDRIVPVDVYVPGCPPTAEALLYGIMQLQRKIRRTGTIVR.

Positions 56, 57, 121, and 151 each coordinate [4Fe-4S] cluster.

The protein belongs to the complex I 20 kDa subunit family. In terms of assembly, NDH-1 is composed of 14 different subunits. Subunits NuoB, C, D, E, F, and G constitute the peripheral sector of the complex. It depends on [4Fe-4S] cluster as a cofactor.

The protein localises to the cell inner membrane. The catalysed reaction is a quinone + NADH + 5 H(+)(in) = a quinol + NAD(+) + 4 H(+)(out). Functionally, NDH-1 shuttles electrons from NADH, via FMN and iron-sulfur (Fe-S) centers, to quinones in the respiratory chain. Couples the redox reaction to proton translocation (for every two electrons transferred, four hydrogen ions are translocated across the cytoplasmic membrane), and thus conserves the redox energy in a proton gradient. This is NADH-quinone oxidoreductase subunit B from Roseobacter denitrificans (strain ATCC 33942 / OCh 114) (Erythrobacter sp. (strain OCh 114)).